Reading from the N-terminus, the 232-residue chain is Sugar fermentation stimulation protein homolog (232 aa).

Belongs to the SfsA family.

The sequence is that of Sugar fermentation stimulation protein homolog from Brucella anthropi (strain ATCC 49188 / DSM 6882 / CCUG 24695 / JCM 21032 / LMG 3331 / NBRC 15819 / NCTC 12168 / Alc 37) (Ochrobactrum anthropi).